The chain runs to 343 residues: MAKRQLNRRQNWRIEKIQGERAARAAKREQHALQELEGGDLGPEQLGLVIAHFGVQVEVEAQDGETAGQVFRCHLRANLPALVTGDRVVWRAGNQGIGVIVAQMPRSTELCRPNNHGQLKPVAANVDLIVIVFAPAPEPHPNLIDRYLVAAEHAGLRPLLLLNKADLINDENGPGLHALLEVYRELGYPLLEVSAHHGDGMQRLQQQLDGHISVFVGQSGVGKSSLVNSLLPDAGTRVGDLSEWSGQGTHTTTTARLYHFPNGGDLIDSPGIREFGLGHVSRDDVEDGFIEFRDLFGTCRFRDCKHDREPGCALLKALEEGRIKPQRMNSYRSIIASLAEDSY.

The CP-type G domain maps to 116 to 275; it reads HGQLKPVAAN…LIDSPGIREF (160 aa). Residues 163-166 and 217-225 each bind GTP; these read NKAD and GQSGVGKSS. C299, C304, H306, and C312 together coordinate Zn(2+).

This sequence belongs to the TRAFAC class YlqF/YawG GTPase family. RsgA subfamily. In terms of assembly, monomer. Associates with 30S ribosomal subunit, binds 16S rRNA. Zn(2+) serves as cofactor.

Its subcellular location is the cytoplasm. In terms of biological role, one of several proteins that assist in the late maturation steps of the functional core of the 30S ribosomal subunit. Helps release RbfA from mature subunits. May play a role in the assembly of ribosomal proteins into the subunit. Circularly permuted GTPase that catalyzes slow GTP hydrolysis, GTPase activity is stimulated by the 30S ribosomal subunit. This is Small ribosomal subunit biogenesis GTPase RsgA from Pseudomonas putida (strain ATCC 700007 / DSM 6899 / JCM 31910 / BCRC 17059 / LMG 24140 / F1).